Here is a 140-residue protein sequence, read N- to C-terminus: Translation initiation factor 2 subunit beta (140 aa).

This sequence belongs to the eIF-2-beta/eIF-5 family. As to quaternary structure, heterotrimer composed of an alpha, a beta and a gamma chain.

Its function is as follows. eIF-2 functions in the early steps of protein synthesis by forming a ternary complex with GTP and initiator tRNA. The protein is Translation initiation factor 2 subunit beta of Metallosphaera sedula (strain ATCC 51363 / DSM 5348 / JCM 9185 / NBRC 15509 / TH2).